Here is a 510-residue protein sequence, read N- to C-terminus: MVQGTTSDAGKSTLVAGICRLLARQGVNVAPFKPQNMALNSAVTVDGGEIGRAQALQAAACYLVPHTDFNPILLKPSSDTGAQIIVQGKALTTLEASAFFGEKSKDYKAMALNAVLDSFERLGQQYHTIVVEGAGSPAEINLRAGDIANMGFAEAVDCPVIIIADIDKGGVFAHLVGTLALLSESEQARVKGFVINRFRGDISLLQSGIDWLEAYTQKPVLGVLPYLHDLHLDAEDALTDSPTKQAKSCFKVRVLVYPRTSNHTDVDPLRLHPDIDFDYVSLQTQALAQTPEIAADLLILPGSKNVRADLAFLREQGWDKQIAKHLRYGGKVLGICGGYQMLGERIADPLAIEDVFGTSQGLGYLPISTEFKAEKQLRCVAGELTLIGQTVAVKGYEIHCGESQYLTSSDAAKGAPLRLINELTCDEQAEKSFADGCLSEDGQVLGTYLHGLFDSPDACQLILRWAGLEDAQAIDINAIREQQLDRLADVLAEHLDLPQLQAILTASVKP.

The GATase cobBQ-type domain occupies 249–458; sequence CFKVRVLVYP…LHGLFDSPDA (210 aa). Residue C336 is the Nucleophile of the active site. Residue H450 is part of the active site.

This sequence belongs to the CobB/CobQ family. CobQ subfamily.

The protein operates within cofactor biosynthesis; adenosylcobalamin biosynthesis. Its function is as follows. Catalyzes amidations at positions B, D, E, and G on adenosylcobyrinic A,C-diamide. NH(2) groups are provided by glutamine, and one molecule of ATP is hydrogenolyzed for each amidation. The sequence is that of Cobyric acid synthase from Shewanella oneidensis (strain ATCC 700550 / JCM 31522 / CIP 106686 / LMG 19005 / NCIMB 14063 / MR-1).